Consider the following 311-residue polypeptide: Malate dehydrogenase (311 aa).

NAD(+) is bound by residues 7-13 and Asp-34; that span reads GAAGGIG. Substrate contacts are provided by Arg-81 and Arg-87. NAD(+)-binding positions include Asn-94 and 117–119; that span reads ITN. Residues Asn-119 and Arg-153 each coordinate substrate. His-177 serves as the catalytic Proton acceptor. Met-227 contributes to the NAD(+) binding site.

The protein belongs to the LDH/MDH superfamily. MDH type 1 family. Homodimer.

The enzyme catalyses (S)-malate + NAD(+) = oxaloacetate + NADH + H(+). In terms of biological role, catalyzes the reversible oxidation of malate to oxaloacetate. The protein is Malate dehydrogenase of Haemophilus influenzae (strain 86-028NP).